The sequence spans 594 residues: Potassium-transporting ATPase potassium-binding subunit (594 aa).

The next 12 membrane-spanning stretches (helical) occupy residues 4–24 (QFFGLLVFYLAILLILAPFLG), 65–85 (QYAVAVLIFSVLGFIAVYALQ), 136–156 (ALTVQNFLSAAVGMSVLFALI), 179–199 (LYVLLPLALALALALVSQGVI), 287–307 (LEMLAILIIPAALCFTFGEMV), 314–334 (VAILAAMTLLFVGLAWLTQNA), 361–381 (FGVAASALFAVVTTAASCGAV), 390–410 (AMGGLGPMLLMQLGEVVFGGV), 413–433 (GLYGMLAFALLGVFIAGLMIG), 450–470 (MVSIAILVTPFLVLAGTALAV), 518–538 (LLGLAMWFGRFLVIVAILALA), and 560–580 (LFIVLLIGTVLLVGALTYVPA).

Belongs to the KdpA family. As to quaternary structure, the system is composed of three essential subunits: KdpA, KdpB and KdpC.

It is found in the cell inner membrane. Its function is as follows. Part of the high-affinity ATP-driven potassium transport (or Kdp) system, which catalyzes the hydrolysis of ATP coupled with the electrogenic transport of potassium into the cytoplasm. This subunit binds the periplasmic potassium ions and delivers the ions to the membrane domain of KdpB through an intramembrane tunnel. This is Potassium-transporting ATPase potassium-binding subunit from Bordetella avium (strain 197N).